The primary structure comprises 433 residues: Divalent metal cation transporter MntH (433 aa).

A run of 11 helical transmembrane segments spans residues 32–52 (LIFA…GNFA), 62–82 (GYDL…FQGL), 101–121 (TLPP…AMAT), 131–151 (IGIA…TGIV), 168–188 (LVIG…LLIV), 209–229 (ALTI…LFLH), 256–276 (VLAA…MAAG), 296–316 (SPLL…ASGV), 345–365 (ALTM…TRAL), 366–386 (VLSQ…LLWF), and 401–421 (ITAI…VILL).

Belongs to the NRAMP family.

It is found in the cell inner membrane. Its function is as follows. H(+)-stimulated, divalent metal cation uptake system. In Acidiphilium cryptum (strain JF-5), this protein is Divalent metal cation transporter MntH.